The following is a 164-amino-acid chain: Endoribonuclease YbeY (164 aa).

Zn(2+)-binding residues include H111, H115, and H121. Positions 140-164 are disordered; it reads ELGHPDPYADDDAQKHSTVTIKDSE. Residues 155–164 are compositionally biased toward polar residues; that stretch reads HSTVTIKDSE.

Belongs to the endoribonuclease YbeY family. Zn(2+) serves as cofactor.

It is found in the cytoplasm. Its function is as follows. Single strand-specific metallo-endoribonuclease involved in late-stage 70S ribosome quality control and in maturation of the 3' terminus of the 16S rRNA. This Pseudomonas fluorescens (strain SBW25) protein is Endoribonuclease YbeY.